Reading from the N-terminus, the 669-residue chain is DNA ligase (669 aa).

Residues 34–38 (DAEYD), 83–84 (SL), and Glu114 contribute to the NAD(+) site. Lys116 functions as the N6-AMP-lysine intermediate in the catalytic mechanism. NAD(+) contacts are provided by Arg137, Glu171, Lys287, and Lys311. Zn(2+) contacts are provided by Cys405, Cys408, Cys423, and Cys428. One can recognise a BRCT domain in the interval 591–669 (NVESYFAGKT…EERFLQELNK (79 aa)).

This sequence belongs to the NAD-dependent DNA ligase family. LigA subfamily. The cofactor is Mg(2+). Mn(2+) serves as cofactor.

It catalyses the reaction NAD(+) + (deoxyribonucleotide)n-3'-hydroxyl + 5'-phospho-(deoxyribonucleotide)m = (deoxyribonucleotide)n+m + AMP + beta-nicotinamide D-nucleotide.. DNA ligase that catalyzes the formation of phosphodiester linkages between 5'-phosphoryl and 3'-hydroxyl groups in double-stranded DNA using NAD as a coenzyme and as the energy source for the reaction. It is essential for DNA replication and repair of damaged DNA. This Bacillus cereus (strain ATCC 14579 / DSM 31 / CCUG 7414 / JCM 2152 / NBRC 15305 / NCIMB 9373 / NCTC 2599 / NRRL B-3711) protein is DNA ligase.